Consider the following 277-residue polypeptide: R-spondin-3 (277 aa).

The N-terminal stretch at 1 to 21 (MHLRLISCFFIILNFMEYIGS) is a signal peptide. 2 FU repeats span residues 35–86 (PNVS…GYYG) and 92–135 (INKC…GLEA). N-linked (GlcNAc...) asparagine glycosylation is present at N36. Cystine bridges form between C41–C48, C45–C54, C57–C76, C80–C95, C98–C105, C102–C111, C114–C125, C129–C142, C148–C190, C159–C166, and C199–C206. The 61-residue stretch at 147–207 (HCEASEWSPW…TCIVQRKKCS (61 aa)) folds into the TSP type-1 domain. A disordered region spans residues 210–277 (ERGKKGRERK…QKSVSVSTVH (68 aa)). Residues 213 to 223 (KKGRERKRKKL) show a composition bias toward basic residues. The span at 232–245 (SSSSDSKGLESSIE) shows a compositional bias: low complexity.

This sequence belongs to the R-spondin family. Interacts with the extracellular domain of FZD8 and LRP6. It however does not form a ternary complex with FZD8 and LRP6. Interacts with WNT1. Binds heparin. Interacts with LGR4, LGR5 and LGR6. Highly expressed in endothelial cells.

Its subcellular location is the secreted. In terms of biological role, activator of the canonical Wnt signaling pathway by acting as a ligand for LGR4-6 receptors, which acts as a key regulator of angiogenesis. Upon binding to LGR4-6 (LGR4, LGR5 or LGR6), LGR4-6 associate with phosphorylated LRP6 and frizzled receptors that are activated by extracellular Wnt receptors, triggering the canonical Wnt signaling pathway to increase expression of target genes. Also regulates the canonical Wnt/beta-catenin-dependent pathway and non-canonical Wnt signaling by acting as an inhibitor of ZNRF3, an important regulator of the Wnt signaling pathway. Acts as a ligand for frizzled FZD8 and LRP6. May negatively regulate the TGF-beta pathway. Acts as a key regulator of angiogenesis by controlling vascular stability and pruning: acts by activating the non-canonical Wnt signaling pathway in endothelial cells. Can also amplify Wnt signaling pathway independently of LGR4-6 receptors, possibly by acting as a direct antagonistic ligand to RNF43 and ZNRF3. This chain is R-spondin-3 (Rspo3), found in Mus musculus (Mouse).